Reading from the N-terminus, the 37-residue chain is Large ribosomal subunit protein bL36 (37 aa).

This sequence belongs to the bacterial ribosomal protein bL36 family.

The chain is Large ribosomal subunit protein bL36 (rpmJ) from Fusobacterium nucleatum subsp. nucleatum (strain ATCC 25586 / DSM 15643 / BCRC 10681 / CIP 101130 / JCM 8532 / KCTC 2640 / LMG 13131 / VPI 4355).